The sequence spans 490 residues: Kinetochore protein Nuf2 homolog (490 aa).

Coiled coils occupy residues D146–A280 and D310–I407. Disordered regions lie at residues Q346–Q365 and I468–K490.

It belongs to the NUF2 family. As to quaternary structure, component of the NDC80 complex, which is composed of at least ndc-80 and him-10. The NDC80 complex interacts with knl-1.

Its subcellular location is the nucleus. It is found in the chromosome. The protein resides in the centromere. It localises to the kinetochore. Acts as a component of the essential kinetochore-associated NDC80 complex, which is required for chromosome segregation in mitosis and meiosis and spindle checkpoint activity. The ndc-80 complex synergistically enhances the affinity of the ska-1 complex for microtubules and may allow the ndc-80 complex to track depolymerizing microtubules. This Caenorhabditis elegans protein is Kinetochore protein Nuf2 homolog (him-10).